Reading from the N-terminus, the 306-residue chain is uncharacterized protein (306 aa).

The next 9 membrane-spanning stretches (helical) occupy residues 13–33 (VLLSQFLNGYEWAVPWIFAFI), 53–73 (PLPMILALFVLHIFMPLFAWG), 86–106 (ITGLTLAVVIPTGITSLIWAA), 112–132 (VGLTLSIILVDTVLSPLIVPL), 147–167 (WGMMKGLIVMVVIPSFLGMLF), 177–197 (AFVSSALSPFSKLCLMAVIAI), 214–234 (AGIAVTVFFIALTGYAAAWLI), 246–268 (VSLIFTGGMRNISAGAVLAVTFF), and 272–294 (VAVPVVIGMLFQQILAALFGYML).

It is found in the cell membrane. This is an uncharacterized protein from Bacillus subtilis (strain 168).